The following is a 24-amino-acid chain: Prokineticin 1-like protein (24 aa).

A disulfide bridge connects residues Cys-7 and Cys-19.

Expressed by the skin glands.

It localises to the secreted. Its function is as follows. Stimulates insulin secretion by BRIN-BD11 cells in vitro. This is Prokineticin 1-like protein from Pelophylax saharicus (Sahara frog).